We begin with the raw amino-acid sequence, 290 residues long: Undecaprenyl-diphosphatase (290 aa).

A run of 8 helical transmembrane segments spans residues 1–21 (MALWIAALLGVIQGIFMFLPV), 49–69 (MILFALVVHVGTLVSIAVVFW), 101–121 (LFWLGMFSVLCTGVLGLTLKA), 126–146 (VFASPLMIAGTLTLTGILLWW), 160–180 (INLKVAGVIGLAQGFALMPGL), 203–223 (YSFFLAIPTICAATLLQAIEV), 232–252 (VGFSALAVGFVVAAIVGIISL), and 266–286 (VFSFYVWALALGIATGLIDLA).

It belongs to the UppP family.

It localises to the cell inner membrane. The catalysed reaction is di-trans,octa-cis-undecaprenyl diphosphate + H2O = di-trans,octa-cis-undecaprenyl phosphate + phosphate + H(+). Functionally, catalyzes the dephosphorylation of undecaprenyl diphosphate (UPP). Confers resistance to bacitracin. This is Undecaprenyl-diphosphatase from Alkalilimnicola ehrlichii (strain ATCC BAA-1101 / DSM 17681 / MLHE-1).